We begin with the raw amino-acid sequence, 676 residues long: XK-related protein 5 (676 aa).

7 helical membrane passes run Trp37–Phe57, Leu114–Ala134, Ile140–Tyr160, Val206–Gln226, Leu239–Pro259, Ser266–Leu286, and Leu294–Tyr314. 4 disordered regions span residues Pro336–Ser362, Thr372–Glu391, Leu495–Gln538, and Pro598–Asp661. Over residues Asn498–Glu509 the composition is skewed to polar residues.

The protein belongs to the XK family.

The protein resides in the cell membrane. In Mus musculus (Mouse), this protein is XK-related protein 5.